The primary structure comprises 254 residues: Glutathione S-transferase F14 (254 aa).

Residues 4–85 form the GST N-terminal domain; sequence SKMKLHCGFI…YLAEQYKDVG (82 aa). Residues 42 to 43, 56 to 57, and 69 to 70 contribute to the glutathione site; these read AK, EV, and EP. In terms of domain architecture, GST C-terminal spans 92 to 231; the sequence is DPKKRAIMSM…DLMKQRRLPI (140 aa).

Belongs to the GST superfamily. Phi family.

The protein localises to the cytoplasm. Its subcellular location is the cytosol. The catalysed reaction is RX + glutathione = an S-substituted glutathione + a halide anion + H(+). Its function is as follows. May be involved in the conjugation of reduced glutathione to a wide number of exogenous and endogenous hydrophobic electrophiles and have a detoxification role against certain herbicides. This Arabidopsis thaliana (Mouse-ear cress) protein is Glutathione S-transferase F14.